A 166-amino-acid polypeptide reads, in one-letter code: 3-isopropylmalate dehydratase small subunit 2 (166 aa).

This sequence belongs to the LeuD family. LeuD type 2 subfamily. Heterodimer of LeuC and LeuD.

It catalyses the reaction (2R,3S)-3-isopropylmalate = (2S)-2-isopropylmalate. The protein operates within amino-acid biosynthesis; L-leucine biosynthesis; L-leucine from 3-methyl-2-oxobutanoate: step 2/4. In terms of biological role, catalyzes the isomerization between 2-isopropylmalate and 3-isopropylmalate, via the formation of 2-isopropylmaleate. This is 3-isopropylmalate dehydratase small subunit 2 (leuD2) from Thermotoga maritima (strain ATCC 43589 / DSM 3109 / JCM 10099 / NBRC 100826 / MSB8).